The chain runs to 100 residues: Large ribosomal subunit protein uL23 (100 aa).

Belongs to the universal ribosomal protein uL23 family. In terms of assembly, part of the 50S ribosomal subunit. Contacts protein L29, and trigger factor when it is bound to the ribosome.

Functionally, one of the early assembly proteins it binds 23S rRNA. One of the proteins that surrounds the polypeptide exit tunnel on the outside of the ribosome. Forms the main docking site for trigger factor binding to the ribosome. This is Large ribosomal subunit protein uL23 from Xylella fastidiosa (strain 9a5c).